Here is a 206-residue protein sequence, read N- to C-terminus: FMN-dependent NADH:quinone oxidoreductase 2 (206 aa).

Residue Ser-10 coordinates FMN.

The protein belongs to the azoreductase type 1 family. In terms of assembly, homodimer. It depends on FMN as a cofactor.

The enzyme catalyses 2 a quinone + NADH + H(+) = 2 a 1,4-benzosemiquinone + NAD(+). It catalyses the reaction N,N-dimethyl-1,4-phenylenediamine + anthranilate + 2 NAD(+) = 2-(4-dimethylaminophenyl)diazenylbenzoate + 2 NADH + 2 H(+). Quinone reductase that provides resistance to thiol-specific stress caused by electrophilic quinones. Functionally, also exhibits azoreductase activity. Catalyzes the reductive cleavage of the azo bond in aromatic azo compounds to the corresponding amines. This Rhizobium etli (strain ATCC 51251 / DSM 11541 / JCM 21823 / NBRC 15573 / CFN 42) protein is FMN-dependent NADH:quinone oxidoreductase 2.